The chain runs to 658 residues: Exoribonuclease 2 (658 aa).

Positions 189-531 constitute an RNB domain; the sequence is REDLTALHFI…NHRLIKAVLT (343 aa). The region spanning 576-658 is the S1 motif domain; the sequence is KPTFQAEIQD…ETRSIVGTLC (83 aa).

This sequence belongs to the RNR ribonuclease family. RNase II subfamily.

The protein resides in the cytoplasm. The enzyme catalyses Exonucleolytic cleavage in the 3'- to 5'-direction to yield nucleoside 5'-phosphates.. Involved in mRNA degradation. Hydrolyzes single-stranded polyribonucleotides processively in the 3' to 5' direction. The protein is Exoribonuclease 2 of Pasteurella multocida (strain Pm70).